The sequence spans 250 residues: Large ribosomal subunit protein uL4 (250 aa).

Disordered regions lie at residues 1-20 (MQVTVRDLDGDDAGTLDLPR) and 51-101 (YAGL…HGLD). A compositionally biased stretch (basic and acidic residues) spans 92–101 (PKAEKDHGLD).

It belongs to the universal ribosomal protein uL4 family. In terms of assembly, part of the 50S ribosomal subunit.

Functionally, one of the primary rRNA binding proteins, this protein initially binds near the 5'-end of the 23S rRNA. It is important during the early stages of 50S assembly. It makes multiple contacts with different domains of the 23S rRNA in the assembled 50S subunit and ribosome. Forms part of the polypeptide exit tunnel. This Halobacterium salinarum (strain ATCC 29341 / DSM 671 / R1) protein is Large ribosomal subunit protein uL4.